We begin with the raw amino-acid sequence, 160 residues long: Succinate dehydrogenase assembly factor 2-B, mitochondrial (160 aa).

The N-terminal 23 residues, Met1–Ala23, are a transit peptide targeting the mitochondrion.

This sequence belongs to the SDHAF2 family. In terms of assembly, interacts with the flavoprotein subunit within the SDH catalytic dimer.

Its subcellular location is the mitochondrion matrix. Its function is as follows. Plays an essential role in the assembly of succinate dehydrogenase (SDH), an enzyme complex (also referred to as respiratory complex II) that is a component of both the tricarboxylic acid (TCA) cycle and the mitochondrial electron transport chain, and which couples the oxidation of succinate to fumarate with the reduction of ubiquinone (coenzyme Q) to ubiquinol. Required for flavinylation (covalent attachment of FAD) of the flavoprotein subunit of the SDH catalytic dimer. This chain is Succinate dehydrogenase assembly factor 2-B, mitochondrial, found in Drosophila pseudoobscura pseudoobscura (Fruit fly).